Here is a 255-residue protein sequence, read N- to C-terminus: Imidazole glycerol phosphate synthase subunit HisF (255 aa).

Residues D11 and D130 contribute to the active site.

Belongs to the HisA/HisF family. As to quaternary structure, heterodimer of HisH and HisF.

It localises to the cytoplasm. It catalyses the reaction 5-[(5-phospho-1-deoxy-D-ribulos-1-ylimino)methylamino]-1-(5-phospho-beta-D-ribosyl)imidazole-4-carboxamide + L-glutamine = D-erythro-1-(imidazol-4-yl)glycerol 3-phosphate + 5-amino-1-(5-phospho-beta-D-ribosyl)imidazole-4-carboxamide + L-glutamate + H(+). It functions in the pathway amino-acid biosynthesis; L-histidine biosynthesis; L-histidine from 5-phospho-alpha-D-ribose 1-diphosphate: step 5/9. Its function is as follows. IGPS catalyzes the conversion of PRFAR and glutamine to IGP, AICAR and glutamate. The HisF subunit catalyzes the cyclization activity that produces IGP and AICAR from PRFAR using the ammonia provided by the HisH subunit. The polypeptide is Imidazole glycerol phosphate synthase subunit HisF (Prochlorococcus marinus subsp. pastoris (strain CCMP1986 / NIES-2087 / MED4)).